The sequence spans 141 residues: Large ribosomal subunit protein uL11 (141 aa).

This sequence belongs to the universal ribosomal protein uL11 family. Part of the ribosomal stalk of the 50S ribosomal subunit. Interacts with L10 and the large rRNA to form the base of the stalk. L10 forms an elongated spine to which L12 dimers bind in a sequential fashion forming a multimeric L10(L12)X complex. Post-translationally, one or more lysine residues are methylated.

In terms of biological role, forms part of the ribosomal stalk which helps the ribosome interact with GTP-bound translation factors. This Campylobacter fetus subsp. fetus (strain 82-40) protein is Large ribosomal subunit protein uL11.